The primary structure comprises 119 residues: Protein RALF-like 22 (119 aa).

An N-terminal signal peptide occupies residues 1–23; sequence MTNTRAIYAVIAILAIVISAVES. Positions 24 to 70 are cleaved as a propeptide — removed in mature form; it reads TGDFGDSLDFVRAGSSSLFSGCTGSIAECIAEEEEMEFDSDISRRIL. Cystine bridges form between Cys-88-Cys-98 and Cys-111-Cys-117.

The protein belongs to the plant rapid alkalinization factor (RALF) family. Proteolytically cleaved, probably by S1P, a subtilisin-like serine protease (subtilase).

The protein resides in the secreted. In terms of biological role, cell signaling peptide that may regulate plant stress, growth, and development. Mediates a rapid alkalinization of extracellular space by mediating a transient increase in the cytoplasmic Ca(2+) concentration leading to a calcium-dependent signaling events through a cell surface receptor and a concomitant activation of some intracellular mitogen-activated protein kinases. This is Protein RALF-like 22 (RALFL22) from Arabidopsis thaliana (Mouse-ear cress).